A 305-amino-acid polypeptide reads, in one-letter code: Probable branched-chain-amino-acid aminotransferase (305 aa).

N6-(pyridoxal phosphate)lysine is present on Lys156.

This sequence belongs to the class-IV pyridoxal-phosphate-dependent aminotransferase family. Requires pyridoxal 5'-phosphate as cofactor.

It catalyses the reaction L-leucine + 2-oxoglutarate = 4-methyl-2-oxopentanoate + L-glutamate. The enzyme catalyses L-isoleucine + 2-oxoglutarate = (S)-3-methyl-2-oxopentanoate + L-glutamate. It carries out the reaction L-valine + 2-oxoglutarate = 3-methyl-2-oxobutanoate + L-glutamate. Its pathway is amino-acid biosynthesis; L-isoleucine biosynthesis; L-isoleucine from 2-oxobutanoate: step 4/4. It functions in the pathway amino-acid biosynthesis; L-leucine biosynthesis; L-leucine from 3-methyl-2-oxobutanoate: step 4/4. The protein operates within amino-acid biosynthesis; L-valine biosynthesis; L-valine from pyruvate: step 4/4. Acts on leucine, isoleucine and valine. In Synechocystis sp. (strain ATCC 27184 / PCC 6803 / Kazusa), this protein is Probable branched-chain-amino-acid aminotransferase (ilvE).